We begin with the raw amino-acid sequence, 295 residues long: Threonine/homoserine exporter RhtA (295 aa).

The Cytoplasmic portion of the chain corresponds to 1–9; the sequence is MPGSLRKMP. A helical transmembrane segment spans residues 10 to 30; it reads VWLPIVILLVAMASIQGGASL. In terms of domain architecture, EamA 1 spans 30-135; the sequence is LAKSLFPLVG…VLAVLGLWFL (106 aa). Residues 31 to 38 lie on the Periplasmic side of the membrane; that stretch reads AKSLFPLV. Residues 39-59 traverse the membrane as a helical segment; sequence GAPGVTALRLALGTLILIAFF. Residues 60–71 are Cytoplasmic-facing; that stretch reads KPWRLRFAKEQR. The helical transmembrane segment at 72–92 threads the bilayer; that stretch reads LPLLFYGVSLGGMNYLFYLSI. Residue Gln93 is a topological domain, periplasmic. A helical membrane pass occupies residues 94 to 114; it reads TVPLGIAVALEFTGPLAVALF. Residues 115 to 118 lie on the Cytoplasmic side of the membrane; sequence SSRR. The helical transmembrane segment at 119-139 threads the bilayer; the sequence is PVDFVWVVLAVLGLWFLLPLG. The Periplasmic portion of the chain corresponds to 140–146; it reads QDVSHVD. A helical transmembrane segment spans residues 147 to 167; it reads LTGCALALGAGACWAIYILSG. Residues 159-278 form the EamA 2 domain; sequence CWAIYILSGQ…LGAIIAASMG (120 aa). At 168–175 the chain is on the cytoplasmic side; that stretch reads QRAGAEHG. Residues 176–196 form a helical membrane-spanning segment; the sequence is PATVAIGSLIAALIFVPIGAL. Residues 197–200 lie on the Periplasmic side of the membrane; that stretch reads QAGE. A helical transmembrane segment spans residues 201-221; the sequence is ALWHWSVIPLGLAVAILSTAL. Residues 222-237 lie on the Cytoplasmic side of the membrane; that stretch reads PYSLEMIALTRLPTRT. Residues 238-258 traverse the membrane as a helical segment; that stretch reads FGTLMSMEPALAAVSGMIFLG. Residues 259-262 are Periplasmic-facing; sequence ETLT. A helical membrane pass occupies residues 263-283; sequence PIQLLALGAIIAASMGSTLTV. Over 284-295 the chain is Cytoplasmic; sequence RKESKIKELDIN.

This sequence belongs to the drug/metabolite transporter (DMT) superfamily. 10 TMS drug/metabolite exporter (DME) (TC 2.A.7.3) family.

Its subcellular location is the cell inner membrane. In terms of biological role, involved in the efflux of threonine and homoserine. The sequence is that of Threonine/homoserine exporter RhtA (rhtA) from Escherichia coli O157:H7.